Reading from the N-terminus, the 571-residue chain is Ubiquitin-like-specific protease 1C (571 aa).

The interval 221-260 (SESKDPKGDRRPNEAYGKGKPNESSPYLLVDDDDGDDDKV) is disordered. The span at 222–233 (ESKDPKGDRRPN) shows a compositional bias: basic and acidic residues. Catalysis depends on residues histidine 426, aspartate 449, and cysteine 512.

Belongs to the peptidase C48 family.

It is found in the nucleus. The protein localises to the nucleoplasm. Protease that catalyzes two essential functions in the SUMO pathway: processing of full-length SUMOs to their mature forms and deconjugation of SUMO from targeted proteins. Cleaves precursors of SUM1 and SUM2, but not of SUM3 or SUM5. Able to release SUM1 and SUM2 from conjugates, but unable to cleave SUM3. Protease activity mainly directed at deconjugating SUM1 and SUM2 from their target proteins. Regulates salt stress responses and flowering time. Redundant with ULP1D. The chain is Ubiquitin-like-specific protease 1C (ULP1C) from Arabidopsis thaliana (Mouse-ear cress).